A 207-amino-acid chain; its full sequence is Small ribosomal subunit protein uS4 (207 aa).

Positions 31–52 (KAKFDSKPGQHGRTSGARTSDY) are disordered. The 61-residue stretch at 97–157 (CRLDNVVYRM…DKSKKQARIV (61 aa)) folds into the S4 RNA-binding domain.

The protein belongs to the universal ribosomal protein uS4 family. In terms of assembly, part of the 30S ribosomal subunit. Contacts protein S5. The interaction surface between S4 and S5 is involved in control of translational fidelity.

Its function is as follows. One of the primary rRNA binding proteins, it binds directly to 16S rRNA where it nucleates assembly of the body of the 30S subunit. With S5 and S12 plays an important role in translational accuracy. This is Small ribosomal subunit protein uS4 from Acidovorax sp. (strain JS42).